The chain runs to 464 residues: UDP-glycosyltransferase 83A1 (464 aa).

UDP-alpha-D-glucose is bound by residues Ser-295, 341-343 (APQ), 358-366 (HCGWNSTLE), and 380-383 (FADQ).

The protein belongs to the UDP-glycosyltransferase family.

The protein is UDP-glycosyltransferase 83A1 (UGT83A1) of Arabidopsis thaliana (Mouse-ear cress).